The chain runs to 107 residues: Small integral membrane protein 19 (107 aa).

Residues 25-43 (ATNVYLIVILVSFGLFMYA) form a helical membrane-spanning segment. The disordered stretch occupies residues 88–107 (RKYEYQQPQSQADSVQLSLE). Over residues 93 to 107 (QQPQSQADSVQLSLE) the composition is skewed to polar residues.

It belongs to the SMIM19 family.

The protein localises to the membrane. This Mus musculus (Mouse) protein is Small integral membrane protein 19 (Smim19).